Consider the following 653-residue polypeptide: Biotin biosynthesis bifunctional protein BioWF (653 aa).

Residue R278 coordinates substrate. Residue 365 to 366 (GY) participates in pyridoxal 5'-phosphate binding. H390 contacts substrate. Residues S436, 461-464 (DDAH), and 492-495 (TASK) each bind pyridoxal 5'-phosphate. An N6-(pyridoxal phosphate)lysine modification is found at K495.

In the N-terminal section; belongs to the BioW family. The protein in the C-terminal section; belongs to the class-II pyridoxal-phosphate-dependent aminotransferase family. BioF subfamily. In terms of assembly, homodimer. Requires Mg(2+) as cofactor. It depends on pyridoxal 5'-phosphate as a cofactor.

It catalyses the reaction heptanedioate + ATP + CoA = 6-carboxyhexanoyl-CoA + AMP + diphosphate. The enzyme catalyses 6-carboxyhexanoyl-[ACP] + L-alanine + H(+) = (8S)-8-amino-7-oxononanoate + holo-[ACP] + CO2. It participates in metabolic intermediate metabolism; pimeloyl-CoA biosynthesis; pimeloyl-CoA from pimelate: step 1/1. It functions in the pathway cofactor biosynthesis; biotin biosynthesis. Catalyzes both the decarboxylative condensation of pimeloyl-[acyl-carrier protein] and L-alanine to produce 8-amino-7-oxononanoate (AON), [acyl-carrier protein], and carbon dioxide, and the transformation of pimelate into pimeloyl-CoA with concomitant hydrolysis of ATP to AMP. The sequence is that of Biotin biosynthesis bifunctional protein BioWF from Cutibacterium acnes (strain DSM 16379 / KPA171202) (Propionibacterium acnes).